Here is an 888-residue protein sequence, read N- to C-terminus: E3 ubiquitin-protein ligase SH3RF1 (888 aa).

An RING-type zinc finger spans residues cysteine 12–arginine 53. SH3 domains are found at residues proline 134 to proline 193 and glutamine 196 to alanine 259. The interval aspartate 275–arginine 321 is disordered. The interval histidine 292–threonine 362 is interaction with RAC1. Serine 304 carries the phosphoserine modification. Positions phenylalanine 305–arginine 321 are enriched in polar residues. The tract at residues histidine 440–leucine 543 is interaction with AKT2. The 62-residue stretch at threonine 445–arginine 506 folds into the SH3 3 domain. Disordered regions lie at residues valine 516–alanine 549, serine 617–methionine 637, and proline 693–threonine 741. The span at threonine 520–threonine 535 shows a compositional bias: polar residues. The residue at position 532 (serine 532) is a Phosphoserine. Polar residues predominate over residues proline 693–serine 704. A compositionally biased stretch (basic and acidic residues) spans lysine 707 to glycine 718. Serine 735 is modified (phosphoserine). The SH3 4 domain occupies valine 829 to isoleucine 888.

Belongs to the SH3RF family. As to quaternary structure, interacts with HERP1. Interacts with RAC1; in a GTP-dependent manner. Interacts with MAP3K10/MLK2 and MAP3K11/MLK3. Interacts with MAPK8IP; this interaction leads to the PJAC complex (POSH-JIP or SH3RF1/MAPK8IP apoptotic complex) with a 1:1 ratio. Interacts with SIAH1. Probably part of a signaling complex that may contain SH3RF1, MAPK8IP, DLK1, MAP2K4/MKK4, MAP2K7/MKK7, MAPK8/JNK1, MAPK9/JNK2, AKT1 and AKT2. Found in a complex with RAC2, MAP3K7/TAK1, MAP2K7/MKK7, MAPK8IP1/JIP1, MAPK8/JNK1 and MAPK9/JNK2. Found in a complex with RAC1, MAP3K11/MLK3, MAP2K7/MKK7, MAPK8IP1/JIP1 and MAPK8/JNK1. Interacts with SH3RF2. In terms of processing, phosphorylated at Ser-304 by AKT1 and AKT2. When phosphorylated, it has reduced ability to bind Rac. Post-translationally, autoubiquitinated. Ubiquitinated by SH3RF2, leading to proteasome-mediated degradation.

It is found in the cytoplasm. It localises to the perinuclear region. The protein localises to the cell projection. Its subcellular location is the lamellipodium. The protein resides in the golgi apparatus. It is found in the trans-Golgi network. It catalyses the reaction S-ubiquitinyl-[E2 ubiquitin-conjugating enzyme]-L-cysteine + [acceptor protein]-L-lysine = [E2 ubiquitin-conjugating enzyme]-L-cysteine + N(6)-ubiquitinyl-[acceptor protein]-L-lysine.. Its pathway is protein modification; protein ubiquitination. Its function is as follows. Has E3 ubiquitin-protein ligase activity. In the absence of an external substrate, it can catalyze self-ubiquitination. Stimulates ubiquitination of potassium channel KCNJ1, enhancing it's dynamin-dependent and clathrin-independent endocytosis. Acts as a scaffold protein that coordinates with MAPK8IP1/JIP1 in organizing different components of the JNK pathway, including RAC1 or RAC2, MAP3K11/MLK3 or MAP3K7/TAK1, MAP2K7/MKK7, MAPK8/JNK1 and/or MAPK9/JNK2 into a functional multiprotein complex to ensure the effective activation of the JNK signaling pathway. Regulates the differentiation of CD4(+) and CD8(+) T-cells and promotes T-helper 1 (Th1) cell differentiation. Regulates the activation of MAPK8/JNK1 and MAPK9/JNK2 in CD4(+) T-cells and the activation of MAPK8/JNK1 in CD8(+) T-cells. Controls proper cortical neuronal migration and the formation of proximal cytoplasmic dilation in the leading process (PCDLP) in migratory neocortical neurons by regulating the proper localization of activated RAC1 and F-actin assembly. The chain is E3 ubiquitin-protein ligase SH3RF1 (SH3RF1) from Pongo abelii (Sumatran orangutan).